Consider the following 525-residue polypeptide: Peptide chain release factor 3 (525 aa).

Residues 11–279 (NKRRTFAIIS…TYLQFAPAPS (269 aa)) enclose the tr-type G domain. Residues 20-27 (SHPDAGKT), 88-92 (DTPGH), and 142-145 (NKFD) contribute to the GTP site.

Belongs to the TRAFAC class translation factor GTPase superfamily. Classic translation factor GTPase family. PrfC subfamily.

The protein resides in the cytoplasm. Increases the formation of ribosomal termination complexes and stimulates activities of RF-1 and RF-2. It binds guanine nucleotides and has strong preference for UGA stop codons. It may interact directly with the ribosome. The stimulation of RF-1 and RF-2 is significantly reduced by GTP and GDP, but not by GMP. This chain is Peptide chain release factor 3, found in Limosilactobacillus reuteri (strain DSM 20016) (Lactobacillus reuteri).